Consider the following 297-residue polypeptide: tRNA(Ile)-lysidine synthase (297 aa).

16–21 contributes to the ATP binding site; that stretch reads SGGSDS.

It belongs to the tRNA(Ile)-lysidine synthase family.

The protein localises to the cytoplasm. The catalysed reaction is cytidine(34) in tRNA(Ile2) + L-lysine + ATP = lysidine(34) in tRNA(Ile2) + AMP + diphosphate + H(+). In terms of biological role, ligates lysine onto the cytidine present at position 34 of the AUA codon-specific tRNA(Ile) that contains the anticodon CAU, in an ATP-dependent manner. Cytidine is converted to lysidine, thus changing the amino acid specificity of the tRNA from methionine to isoleucine. This Mesomycoplasma hyopneumoniae (strain 232) (Mycoplasma hyopneumoniae) protein is tRNA(Ile)-lysidine synthase.